We begin with the raw amino-acid sequence, 40 residues long: Large ribosomal subunit protein bL36A (40 aa).

The protein belongs to the bacterial ribosomal protein bL36 family.

This Kineococcus radiotolerans (strain ATCC BAA-149 / DSM 14245 / SRS30216) protein is Large ribosomal subunit protein bL36A.